The following is a 398-amino-acid chain: Acetate kinase (398 aa).

Asn-8 provides a ligand contact to Mg(2+). Residue Lys-15 coordinates ATP. Residue Arg-89 coordinates substrate. Residue Asp-146 is the Proton donor/acceptor of the active site. Residues 206–210 (HIGNG), 283–285 (DMR), and 331–335 (GMGEN) contribute to the ATP site. Glu-383 is a Mg(2+) binding site.

This sequence belongs to the acetokinase family. As to quaternary structure, homodimer. It depends on Mg(2+) as a cofactor. The cofactor is Mn(2+).

The protein resides in the cytoplasm. It carries out the reaction acetate + ATP = acetyl phosphate + ADP. It functions in the pathway metabolic intermediate biosynthesis; acetyl-CoA biosynthesis; acetyl-CoA from acetate: step 1/2. In terms of biological role, catalyzes the formation of acetyl phosphate from acetate and ATP. Can also catalyze the reverse reaction. In Streptococcus pyogenes serotype M49 (strain NZ131), this protein is Acetate kinase.